Consider the following 328-residue polypeptide: Ketol-acid reductoisomerase (NADP(+)) (328 aa).

One can recognise a KARI N-terminal Rossmann domain in the interval 2-182 (AKIYRDVDAS…GATRAGVIET (181 aa)). NADP(+) is bound by residues 25–28 (YGIQ), arginine 48, serine 53, and 83–86 (DMEQ). Residue histidine 108 is part of the active site. NADP(+) is bound at residue glycine 134. A KARI C-terminal knotted domain is found at 183–328 (TFAEETETDL…IEMRRLLFGQ (146 aa)). Mg(2+) contacts are provided by aspartate 191, glutamate 195, glutamate 227, and glutamate 231. Position 252 (serine 252) interacts with substrate.

Belongs to the ketol-acid reductoisomerase family. It depends on Mg(2+) as a cofactor.

The catalysed reaction is (2R)-2,3-dihydroxy-3-methylbutanoate + NADP(+) = (2S)-2-acetolactate + NADPH + H(+). The enzyme catalyses (2R,3R)-2,3-dihydroxy-3-methylpentanoate + NADP(+) = (S)-2-ethyl-2-hydroxy-3-oxobutanoate + NADPH + H(+). Its pathway is amino-acid biosynthesis; L-isoleucine biosynthesis; L-isoleucine from 2-oxobutanoate: step 2/4. The protein operates within amino-acid biosynthesis; L-valine biosynthesis; L-valine from pyruvate: step 2/4. Involved in the biosynthesis of branched-chain amino acids (BCAA). Catalyzes an alkyl-migration followed by a ketol-acid reduction of (S)-2-acetolactate (S2AL) to yield (R)-2,3-dihydroxy-isovalerate. In the isomerase reaction, S2AL is rearranged via a Mg-dependent methyl migration to produce 3-hydroxy-3-methyl-2-ketobutyrate (HMKB). In the reductase reaction, this 2-ketoacid undergoes a metal-dependent reduction by NADPH to yield (R)-2,3-dihydroxy-isovalerate. This chain is Ketol-acid reductoisomerase (NADP(+)), found in Pyrobaculum arsenaticum (strain DSM 13514 / JCM 11321 / PZ6).